The chain runs to 237 residues: Cysteine-rich venom protein DIS3 (237 aa).

The signal sequence occupies residues 1–18; sequence MFVFILLSLAAVLQQSFG. An SCP domain is found at 37–165; the sequence is VDKHNAFRRS…SYDYFYVCQY (129 aa). 7 disulfide bridges follow: Cys74–Cys152, Cys91–Cys166, Cys147–Cys163, Cys185–Cys192, Cys188–Cys197, Cys201–Cys234, and Cys219–Cys232. The ShKT domain occupies 201–234; sequence CSREDVFTNCKSLVAKSNCQDDYIRKNCLATCFC.

It belongs to the CRISP family. In terms of tissue distribution, expressed by the venom gland.

Its subcellular location is the secreted. In terms of biological role, weakly blocks contraction of smooth muscle elicited by high potassium-induced depolarization, but does not block caffeine-stimulated contraction. May target voltage-gated calcium channels on smooth muscle. In Dispholidus typus (Boomslang), this protein is Cysteine-rich venom protein DIS3.